A 428-amino-acid polypeptide reads, in one-letter code: MSDNMNIIDELQWRGLINQSTDLEALKEATQNPITLYCGFDPTGSSLHAGHLVPLIMLKRFQQFGHRPITLAGGATGMIGDPRDVGERSMLTEEQIGENMVAIKKQLEAFVDFTEDSDVDSPAVMVNNADWISQMNVIEYLRDVGKNFSLNTMLDRDTVKRRLESDGISYTEFSYMLLQANDYVHLHNEFDCVLQIGGGDQWGNIVSGVDLNRRVNGAKVHGLTVPLVTDAEGNKFGKSTGGGKLWLDPQLTSPYSWYQYFINAGDSVVIDYLRWFTFLSQEEIAELERKVAEEPFKREAQRVLAREMTTLVHGAAATEAVELAAQALFGKAELQDLDEPTLASALQETEVAEVGADATILDLLVESGLEKSKGAARRTVGEGGAYVNNQRIEDIEWSPSAEELLHGSWLVLRKGKKRFAGARVGASS.

Y37 provides a ligand contact to L-tyrosine. The 'HIGH' region signature appears at 42–51; that stretch reads PTGSSLHAGH. L-tyrosine-binding residues include Y175 and Q179. Positions 235 to 239 match the 'KMSKS' region motif; sequence KFGKS. Position 238 (K238) interacts with ATP. The 58-residue stretch at 358 to 415 folds into the S4 RNA-binding domain; it reads ATILDLLVESGLEKSKGAARRTVGEGGAYVNNQRIEDIEWSPSAEELLHGSWLVLRKG.

Belongs to the class-I aminoacyl-tRNA synthetase family. TyrS type 1 subfamily. Homodimer.

Its subcellular location is the cytoplasm. The catalysed reaction is tRNA(Tyr) + L-tyrosine + ATP = L-tyrosyl-tRNA(Tyr) + AMP + diphosphate + H(+). In terms of biological role, catalyzes the attachment of tyrosine to tRNA(Tyr) in a two-step reaction: tyrosine is first activated by ATP to form Tyr-AMP and then transferred to the acceptor end of tRNA(Tyr). The polypeptide is Tyrosine--tRNA ligase (Corynebacterium jeikeium (strain K411)).